A 1111-amino-acid polypeptide reads, in one-letter code: MEIAAKSNSKRMYSWWWDSHNTPKNSKWLQDNLADMDSNVKQMIKVLEEDADSFARRAEMYYRKRPELMKLVEEFYRAYRALAERYNHATGVIHKAHETIAEAFPNQVPLIFGDESHGGALTNDVDPQTPDMPPPFRARGNPDEFQQDALGFSLSHVHDVKRNIDFSEEPLFVSNGKARKGLNFNDHGDGKGRNGLKDHILSESERASKAEAEVVALKDSLSKMQAEKQASLALFEKNLERLSNLESEVSRAQADSRGINDRAASAEAEIQTLRETLYKLESEKESSFLQYHKCLQKIADLEDGLSVAHKEAGERASKAETETLALKRSLAKAETDKETALIQYRQCLNTISNLEERLRKAEEDARLINERAEKAGVEVENLKQTVSKLIKDKEASELQFQQCLNIIASLKVKLHHAQEETQSLSHEIEDGVAKLKFSEEKCLLLERSNQNLHSELDSLLEKLGNQSQKLTEKQTELVKLWSCVQAEHLHFQEAETAFQTLQQLHSQSQEELNNLAVELQTVSQIMKDMEMRNNELHEELEQAKVENKGLNDLNFTMEKLVQKNLMLEKSISYLNSELESFRRKLKTFEEACQSLSEEKSCLISENQHNVIENTVLIEWLRQLRLEAVGIATEKTDLEGKAKTIGDKLTDAETENLQLKRNLLSIRSEKHHLEDEITNVKDQLHEKEKEFEEIKMEKEKLIQEVFKERKQVELWESQAATFFCDKQISVVHETLIEATTRELAEACKNLESKSASRDADIEKLKRSQTIVLLNESIKSLEDYVFTHRESAGEVSKGADLMDEFLKLEGMCLRIKAIAEAIMEKEKFLMLENTNTYSMLEASLKQIKELKTGGGRSMRKQDGGSGRMRKQSHETEMVMKDIVLDQTSDGSSYEIVSKKGNSELDHLGFVELKPVKTHKTETKALSEESLIVEKVEIFDGFMDPNREVNKRRVLERLDSDLQKLENLQITVEDLKSKVETVEKEKTKVGENEYKTIKGQLEEGEEAIEKLFTVNRKLTTKAESEKDIDRRRRIFEHARRGTEKIGRLQSEIQRIQFLLMKLEGEREHRLRSKISDTKVLLRDYIYGRTRSVSMKKRTKKRSVFCGCVQQPESP.

Residues 13–93 (YSWWWDSHNT…ERYNHATGVI (81 aa)) form the NAB domain. Coiled-coil stretches lie at residues 202 to 287 (SESE…KESS), 314 to 605 (ERAS…LISE), and 642 to 752 (KTIG…LESK). The segment at 850–870 (TGGGRSMRKQDGGSGRMRKQS) is disordered. Residues 943 to 1009 (NREVNKRRVL…EGEEAIEKLF (67 aa)) adopt a coiled-coil conformation.

It belongs to the NET family.

Its function is as follows. Plant-specific actin binding protein. May be part of a membrane-cytoskeletal adapter complex. The protein is Protein NETWORKED 1C of Arabidopsis thaliana (Mouse-ear cress).